We begin with the raw amino-acid sequence, 274 residues long: Thiamine kinase (274 aa).

This sequence belongs to the thiamine kinase family.

It carries out the reaction thiamine + ATP = thiamine phosphate + ADP + H(+). It participates in cofactor biosynthesis; thiamine diphosphate biosynthesis; thiamine phosphate from thiamine: step 1/1. In terms of biological role, catalyzes the ATP-dependent phosphorylation of thiamine to thiamine phosphate. Is involved in thiamine salvage. The protein is Thiamine kinase of Shigella boydii serotype 4 (strain Sb227).